We begin with the raw amino-acid sequence, 302 residues long: Oxygen-dependent coproporphyrinogen-III oxidase (302 aa).

S94 contributes to the substrate binding site. The a divalent metal cation site is built by H98 and H108. H108 acts as the Proton donor in catalysis. A substrate-binding site is contributed by 110–112 (NVR). Residues H147 and H177 each contribute to the a divalent metal cation site. The interval 242-277 (YVEFNLVFDRGTLFGLQSGGRTESILMSMPPVANWR) is important for dimerization. 260–262 (GGR) provides a ligand contact to substrate.

Belongs to the aerobic coproporphyrinogen-III oxidase family. As to quaternary structure, homodimer. Requires a divalent metal cation as cofactor.

Its subcellular location is the cytoplasm. It carries out the reaction coproporphyrinogen III + O2 + 2 H(+) = protoporphyrinogen IX + 2 CO2 + 2 H2O. Its pathway is porphyrin-containing compound metabolism; protoporphyrin-IX biosynthesis; protoporphyrinogen-IX from coproporphyrinogen-III (O2 route): step 1/1. In terms of biological role, involved in the heme biosynthesis. Catalyzes the aerobic oxidative decarboxylation of propionate groups of rings A and B of coproporphyrinogen-III to yield the vinyl groups in protoporphyrinogen-IX. This is Oxygen-dependent coproporphyrinogen-III oxidase from Ralstonia nicotianae (strain ATCC BAA-1114 / GMI1000) (Ralstonia solanacearum).